The following is a 406-amino-acid chain: Argininosuccinate synthase (406 aa).

9-17 serves as a coordination point for ATP; sequence AYSGGLDTS. Tyr-86 lines the L-citrulline pocket. Gly-116 contacts ATP. Positions 118, 122, and 123 each coordinate L-aspartate. Asn-122 is an L-citrulline binding site. 5 residues coordinate L-citrulline: Arg-126, Ser-174, Ser-183, Glu-259, and Tyr-271.

This sequence belongs to the argininosuccinate synthase family. Type 1 subfamily. Homotetramer.

Its subcellular location is the cytoplasm. It catalyses the reaction L-citrulline + L-aspartate + ATP = 2-(N(omega)-L-arginino)succinate + AMP + diphosphate + H(+). Its pathway is amino-acid biosynthesis; L-arginine biosynthesis; L-arginine from L-ornithine and carbamoyl phosphate: step 2/3. This chain is Argininosuccinate synthase, found in Geobacillus kaustophilus (strain HTA426).